Consider the following 531-residue polypeptide: CCA tRNA nucleotidyltransferase, mitochondrial (531 aa).

It belongs to the tRNA nucleotidyltransferase/poly(A) polymerase family.

The protein resides in the mitochondrion. Its subcellular location is the cytoplasm. It localises to the nucleus. It catalyses the reaction a tRNA precursor + 2 CTP + ATP = a tRNA with a 3' CCA end + 3 diphosphate. In terms of biological role, nucleotidyltransferase that catalyzes the addition and repair of the essential 3'-terminal CCA sequence in tRNAs, which is necessary for the attachment of amino acids to the 3' terminus of tRNA molecules, using CTP and ATP as substrates. tRNA 3'-terminal CCA addition is required both for tRNA processing and repair. Also involved in tRNA surveillance by mediating tandem CCA addition to generate a CCACCA at the 3' terminus of unstable tRNAs. While stable tRNAs receive only 3'-terminal CCA, unstable tRNAs are marked with CCACCA and rapidly degraded. The structural flexibility of RNA controls the choice between CCA versus CCACCA addition: following the first CCA addition cycle, nucleotide-binding to the active site triggers a clockwise screw motion, producing torque on the RNA. This ejects stable RNAs, whereas unstable RNAs are refolded while bound to the enzyme and subjected to a second CCA catalytic cycle. This is CCA tRNA nucleotidyltransferase, mitochondrial (CCA1) from Candida glabrata (strain ATCC 2001 / BCRC 20586 / JCM 3761 / NBRC 0622 / NRRL Y-65 / CBS 138) (Yeast).